We begin with the raw amino-acid sequence, 818 residues long: Phenylalanine--tRNA ligase beta subunit (818 aa).

In terms of domain architecture, tRNA-binding spans 39 to 148 (AAELQKFEVA…EDAVVGENFT (110 aa)). Residues 423 to 498 (SQKKPLDFSA…RIYGYDKIES (76 aa)) enclose the B5 domain. Positions 476, 482, 485, and 486 each coordinate Mg(2+). The 94-residue stretch at 724–817 (SDFQANFRDY…ISQKFQGTLR (94 aa)) folds into the FDX-ACB domain.

This sequence belongs to the phenylalanyl-tRNA synthetase beta subunit family. Type 1 subfamily. Tetramer of two alpha and two beta subunits. The cofactor is Mg(2+).

The protein localises to the cytoplasm. The catalysed reaction is tRNA(Phe) + L-phenylalanine + ATP = L-phenylalanyl-tRNA(Phe) + AMP + diphosphate + H(+). The chain is Phenylalanine--tRNA ligase beta subunit from Rickettsia conorii (strain ATCC VR-613 / Malish 7).